A 291-amino-acid chain; its full sequence is 4-hydroxy-tetrahydrodipicolinate synthase (291 aa).

Pyruvate is bound at residue Thr-45. Catalysis depends on Tyr-131, which acts as the Proton donor/acceptor. The active-site Schiff-base intermediate with substrate is the Lys-159. Pyruvate is bound at residue Ile-202.

The protein belongs to the DapA family. Homotetramer; dimer of dimers.

It is found in the cytoplasm. The enzyme catalyses L-aspartate 4-semialdehyde + pyruvate = (2S,4S)-4-hydroxy-2,3,4,5-tetrahydrodipicolinate + H2O + H(+). Its pathway is amino-acid biosynthesis; L-lysine biosynthesis via DAP pathway; (S)-tetrahydrodipicolinate from L-aspartate: step 3/4. In terms of biological role, catalyzes the condensation of (S)-aspartate-beta-semialdehyde [(S)-ASA] and pyruvate to 4-hydroxy-tetrahydrodipicolinate (HTPA). The polypeptide is 4-hydroxy-tetrahydrodipicolinate synthase (Methanosarcina acetivorans (strain ATCC 35395 / DSM 2834 / JCM 12185 / C2A)).